The sequence spans 458 residues: Dihydrolipoyl dehydrogenase (458 aa).

FAD-binding positions include 30-38 (DKGKLGGTC), K47, and A112. Residues C38 and C43 are joined by a disulfide bond. NAD(+) contacts are provided by residues 177–181 (GGGVI), E200, and 263–266 (AIGR). Positions 305 and 313 each coordinate FAD. The Proton acceptor role is filled by H437.

The protein belongs to the class-I pyridine nucleotide-disulfide oxidoreductase family. In terms of assembly, homodimer. The cofactor is FAD.

The protein resides in the cytoplasm. It carries out the reaction N(6)-[(R)-dihydrolipoyl]-L-lysyl-[protein] + NAD(+) = N(6)-[(R)-lipoyl]-L-lysyl-[protein] + NADH + H(+). It participates in ketone degradation; acetoin degradation. The sequence is that of Dihydrolipoyl dehydrogenase (acoL) from Bacillus subtilis (strain 168).